The chain runs to 105 residues: Large ribosomal subunit protein uL24 (105 aa).

Belongs to the universal ribosomal protein uL24 family. As to quaternary structure, part of the 50S ribosomal subunit.

One of two assembly initiator proteins, it binds directly to the 5'-end of the 23S rRNA, where it nucleates assembly of the 50S subunit. In terms of biological role, one of the proteins that surrounds the polypeptide exit tunnel on the outside of the subunit. The sequence is that of Large ribosomal subunit protein uL24 from Xanthomonas campestris pv. campestris (strain 8004).